A 150-amino-acid polypeptide reads, in one-letter code: Catabolic 3-dehydroquinase 1 (150 aa).

The active-site Proton acceptor is Tyr24. Substrate contacts are provided by Asn75, His81, and Asp88. Catalysis depends on His101, which acts as the Proton donor. Substrate-binding positions include 102 to 103 and Arg112; that span reads VS.

The protein belongs to the type-II 3-dehydroquinase family. As to quaternary structure, homododecamer. Adopts a ring-like structure, composed of an arrangement of two hexameric rings stacked on top of one another.

The enzyme catalyses 3-dehydroquinate = 3-dehydroshikimate + H2O. The protein operates within aromatic compound metabolism; 3,4-dihydroxybenzoate biosynthesis; 3,4-dihydroxybenzoate from 3-dehydroquinate: step 1/2. Functionally, is involved in the catabolism of quinate. Allows the utilization of quinate as carbon source via the beta-ketoadipate pathway. This Aspergillus fumigatus (strain ATCC MYA-4609 / CBS 101355 / FGSC A1100 / Af293) (Neosartorya fumigata) protein is Catabolic 3-dehydroquinase 1.